A 155-amino-acid chain; its full sequence is Small ribosomal subunit protein uS7 (155 aa).

The protein belongs to the universal ribosomal protein uS7 family. As to quaternary structure, part of the 30S ribosomal subunit. Contacts proteins S9 and S11.

Its function is as follows. One of the primary rRNA binding proteins, it binds directly to 16S rRNA where it nucleates assembly of the head domain of the 30S subunit. Is located at the subunit interface close to the decoding center, probably blocks exit of the E-site tRNA. The chain is Small ribosomal subunit protein uS7 from Xanthomonas campestris pv. campestris (strain 8004).